The chain runs to 496 residues: Zinc finger and SCAN domain-containing protein 5C (496 aa).

The segment covering 1 to 19 (MAANCTSSWSLGESCNSPG) has biased composition (polar residues). Residues 1-38 (MAANCTSSWSLGESCNSPGSEPPQSMPSPATQLGNHDS) form a disordered region. Residues 44-126 (HVNFRMFSCP…DLLRNNRRPK (83 aa)) form the SCAN box domain. Disordered regions lie at residues 149–188 (EAPA…TLPR) and 203–347 (PETT…HPSG). A compositionally biased stretch (polar residues) spans 161-171 (VSSQRTSSVNQ). Residues 210-223 (GDPKALRPKPTLEK) show a composition bias toward basic and acidic residues. Polar residues predominate over residues 234–247 (GLTSPEPQLPNSPT). Residues 253–263 (KEGKEPQKRAS) show a composition bias toward basic and acidic residues. 5 consecutive C2H2-type zinc fingers follow at residues 356–378 (FACE…TRSH), 384–406 (FQCN…QRTH), 412–434 (YTCD…KRSH), 440–462 (FECK…QRIH), and 468–490 (HKCS…QKTH).

Its subcellular location is the nucleus. Functionally, may be involved in transcriptional regulation. The protein is Zinc finger and SCAN domain-containing protein 5C of Homo sapiens (Human).